Consider the following 172-residue polypeptide: Small ribosomal subunit protein uS5 (172 aa).

The S5 DRBM domain occupies 16–79 (LKDRLVAINR…ESAKKNLVKV (64 aa)).

The protein belongs to the universal ribosomal protein uS5 family. Part of the 30S ribosomal subunit. Contacts proteins S4 and S8.

With S4 and S12 plays an important role in translational accuracy. In terms of biological role, located at the back of the 30S subunit body where it stabilizes the conformation of the head with respect to the body. In Bacteroides thetaiotaomicron (strain ATCC 29148 / DSM 2079 / JCM 5827 / CCUG 10774 / NCTC 10582 / VPI-5482 / E50), this protein is Small ribosomal subunit protein uS5.